Here is a 282-residue protein sequence, read N- to C-terminus: Putative phosphite transport system permease protein HtxC (282 aa).

The next 4 membrane-spanning stretches (helical) occupy residues 23–43, 81–101, 130–150, and 239–259; these read HFAT…VCQI, LAMA…LALM, VYAL…VLAI, and FNKM…IDFI. Residues 77–260 enclose the ABC transmembrane type-1 domain; it reads AGETLAMATI…LMVSAIDFIS (184 aa).

It belongs to the binding-protein-dependent transport system permease family.

The protein resides in the cell inner membrane. Probably forms part of a binding-protein-dependent hypophosphite transporter. This Stutzerimonas stutzeri (Pseudomonas stutzeri) protein is Putative phosphite transport system permease protein HtxC (htxC).